We begin with the raw amino-acid sequence, 873 residues long: Probable inorganic carbon transporter subunit DabA (873 aa).

Residues C393, D395, H575, and C590 each contribute to the Zn(2+) site.

The protein belongs to the inorganic carbon transporter (TC 9.A.2) DabA family. As to quaternary structure, forms a complex with DabB. The cofactor is Zn(2+).

The protein localises to the cell membrane. Its function is as follows. Part of an energy-coupled inorganic carbon pump. The protein is Probable inorganic carbon transporter subunit DabA of Bacillus licheniformis (strain ATCC 14580 / DSM 13 / JCM 2505 / CCUG 7422 / NBRC 12200 / NCIMB 9375 / NCTC 10341 / NRRL NRS-1264 / Gibson 46).